We begin with the raw amino-acid sequence, 116 residues long: Phosphoribosyl-ATP pyrophosphatase (116 aa).

It belongs to the PRA-PH family.

Its subcellular location is the cytoplasm. It catalyses the reaction 1-(5-phospho-beta-D-ribosyl)-ATP + H2O = 1-(5-phospho-beta-D-ribosyl)-5'-AMP + diphosphate + H(+). The protein operates within amino-acid biosynthesis; L-histidine biosynthesis; L-histidine from 5-phospho-alpha-D-ribose 1-diphosphate: step 2/9. The sequence is that of Phosphoribosyl-ATP pyrophosphatase from Bordetella avium (strain 197N).